We begin with the raw amino-acid sequence, 398 residues long: Arylacetamide deacetylase (398 aa).

The Cytoplasmic portion of the chain corresponds to 1–5 (MGKTI). A helical; Signal-anchor for type II membrane protein membrane pass occupies residues 6–26 (SLLISVVLVAYYLYIPLPDAI). The Lumenal segment spans residues 27 to 398 (EEPWKVVWET…QYLSWLIKNL (372 aa)). Positions 110–112 (HGG) match the Involved in the stabilization of the negatively charged intermediate by the formation of the oxyanion hole motif. An intrachain disulfide couples Cys-115 to Cys-339. The active site involves Ser-188. Asn-281 is a glycosylation site (N-linked (GlcNAc...) asparagine). Active-site residues include Asp-342 and His-372.

This sequence belongs to the 'GDXG' lipolytic enzyme family. N-glycosylated. In terms of tissue distribution, highest levels in liver with lower levels in jejunum and kidney.

It is found in the endoplasmic reticulum membrane. The protein localises to the microsome membrane. The enzyme catalyses a triacylglycerol + H2O = a diacylglycerol + a fatty acid + H(+). Functionally, displays cellular triglyceride lipase activity in liver, increases the levels of intracellular fatty acids derived from the hydrolysis of newly formed triglyceride stores and plays a role in very low-density lipoprotein assembly. Displays serine esterase activity in liver. Deacetylates a variety of arylacetamide substrates, including xenobiotic compounds and procarcinogens, converting them to the primary arylamide compounds and increasing their toxicity. The chain is Arylacetamide deacetylase (Aadac) from Mus musculus (Mouse).